Here is a 368-residue protein sequence, read N- to C-terminus: UDP-N-acetylglucosamine--N-acetylmuramyl-(pentapeptide) pyrophosphoryl-undecaprenol N-acetylglucosamine transferase (368 aa).

Residues 13–15 (TGG), Asn-124, Arg-167, Ser-195, and Gln-296 each bind UDP-N-acetyl-alpha-D-glucosamine.

Belongs to the glycosyltransferase 28 family. MurG subfamily.

It localises to the cell inner membrane. The catalysed reaction is di-trans,octa-cis-undecaprenyl diphospho-N-acetyl-alpha-D-muramoyl-L-alanyl-D-glutamyl-meso-2,6-diaminopimeloyl-D-alanyl-D-alanine + UDP-N-acetyl-alpha-D-glucosamine = di-trans,octa-cis-undecaprenyl diphospho-[N-acetyl-alpha-D-glucosaminyl-(1-&gt;4)]-N-acetyl-alpha-D-muramoyl-L-alanyl-D-glutamyl-meso-2,6-diaminopimeloyl-D-alanyl-D-alanine + UDP + H(+). It participates in cell wall biogenesis; peptidoglycan biosynthesis. In terms of biological role, cell wall formation. Catalyzes the transfer of a GlcNAc subunit on undecaprenyl-pyrophosphoryl-MurNAc-pentapeptide (lipid intermediate I) to form undecaprenyl-pyrophosphoryl-MurNAc-(pentapeptide)GlcNAc (lipid intermediate II). This is UDP-N-acetylglucosamine--N-acetylmuramyl-(pentapeptide) pyrophosphoryl-undecaprenol N-acetylglucosamine transferase from Maricaulis maris (strain MCS10) (Caulobacter maris).